A 382-amino-acid polypeptide reads, in one-letter code: Alanine racemase (382 aa).

Lys39 serves as the catalytic Proton acceptor; specific for D-alanine. N6-(pyridoxal phosphate)lysine is present on Lys39. Arg138 is a binding site for substrate. Tyr265 serves as the catalytic Proton acceptor; specific for L-alanine. Residue Met312 coordinates substrate.

The protein belongs to the alanine racemase family. It depends on pyridoxal 5'-phosphate as a cofactor.

It catalyses the reaction L-alanine = D-alanine. Its pathway is amino-acid biosynthesis; D-alanine biosynthesis; D-alanine from L-alanine: step 1/1. In terms of biological role, catalyzes the interconversion of L-alanine and D-alanine. May also act on other amino acids. This is Alanine racemase (alr) from Staphylococcus epidermidis (strain ATCC 35984 / DSM 28319 / BCRC 17069 / CCUG 31568 / BM 3577 / RP62A).